Reading from the N-terminus, the 419-residue chain is Dynein regulatory complex protein 9 (419 aa).

Disordered stretches follow at residues 1-47 (MEGE…SPEV) and 393-419 (SFKM…RGKK). Acidic residues predominate over residues 34-44 (EELEEEEEETS). The 30-residue stretch at 371-400 (ELRSIVKLQAWWRGTVVRREIGSFKMPKKE) folds into the IQ domain.

This sequence belongs to the DRC9 family. In terms of assembly, component of the nexin-dynein regulatory complex (N-DRC). Interacts (via IQ domain) with CALM when calcium levels are low. Does not interact with CALM in the presence of Ca(2+). Interacts with the HSP70 proteins HSPA1L and HSPA8. May form a complex with CAMK4 and HSP70.

Its subcellular location is the cytoplasm. It is found in the cell projection. The protein resides in the cilium. The protein localises to the flagellum. It localises to the cytoskeleton. Its subcellular location is the flagellum axoneme. Component of the nexin-dynein regulatory complex (N-DRC), a key regulator of ciliary/flagellar motility which maintains the alignment and integrity of the distal axoneme and regulates microtubule sliding in motile axonemes. Binds calmodulin when cellular Ca(2+) levels are low and thereby contributes to the regulation of calcium and calmodulin-dependent protein kinase IV (CAMK4) activity; contributes to the regulation of CAMK4 signaling cascades. Required for normal axoneme assembly in sperm flagella, normal sperm tail formation and for male fertility. The polypeptide is Dynein regulatory complex protein 9 (Iqcg) (Rattus norvegicus (Rat)).